The chain runs to 62 residues: Frontoxin III (62 aa).

Intrachain disulfides connect cysteine 3/cysteine 24, cysteine 17/cysteine 41, cysteine 43/cysteine 54, and cysteine 55/cysteine 60.

In terms of tissue distribution, expressed by the venom gland.

The protein resides in the secreted. Functionally, binds to muscle nicotinic acetylcholine receptor (nAChR) and inhibit acetylcholine from binding to the receptor, thereby impairing neuromuscular transmission. This Micrurus frontalis (Coral snake) protein is Frontoxin III.